The primary structure comprises 473 residues: Myocyte-specific enhancer factor 2C (473 aa).

Positions 1–61 constitute an MADS-box domain; that stretch reads MGRKKIQITR…NKLFQYASTD (61 aa). The residue at position 4 (Lys-4) is an N6-acetyllysine. Positions 58-86 form a DNA-binding region, mef2-type; it reads ASTDMDKVLLKYTEYNEPHESRTNSDIVE. Ser-59 is subject to Phosphoserine; by CK2. A disordered region spans residues 91–116; that stretch reads KGLNGCDSPDPDADDSVGHSPESEDK. Phosphoserine is present on residues Ser-98, Ser-106, and Ser-110. Lys-116 and Lys-119 each carry N6-acetyllysine. Residues 180-206 form a disordered region; it reads NSMSPGVTHRPPSAGNTGGLMGGDLTS. Phosphoserine is present on residues Ser-222 and Ser-228. An N6-acetyllysine mark is found at Lys-234 and Lys-239. Phosphoserine is present on Ser-240. N6-acetyllysine occurs at positions 252 and 264. Residues 271-278 are beta domain; that stretch reads SEDVDLLL. Residues Thr-293 and Thr-300 each carry the phosphothreonine; by MAPK14 modification. The segment at 368 to 399 is transcription repressor; that stretch reads ACTSTHLSQSSNLSLPSTQSLNIKSEPVSPPR. Residues 375-390 are compositionally biased toward polar residues; it reads SQSSNLSLPSTQSLNI. Positions 375 to 473 are disordered; sequence SQSSNLSLPS…RMRLSEGWAT (99 aa). Lys-391 participates in a covalent cross-link: Glycyl lysine isopeptide (Lys-Gly) (interchain with G-Cter in SUMO). Ser-396 carries the post-translational modification Phosphoserine; by CDK5. A Phosphoserine; by MAPK7 modification is found at Ser-419. Positions 419–432 are enriched in low complexity; that stretch reads SPVDSLSSCSSSYD. Over residues 433–443 the composition is skewed to basic and acidic residues; sequence GSDREDHRNEF. Position 445 is a phosphoserine (Ser-445).

This sequence belongs to the MEF2 family. Forms a complex with class II HDACs in undifferentiating cells. On myogenic differentiation, HDACs are released into the cytoplasm allowing MEF2s to interact with other proteins for activation. Interacts with EP300 in differentiating cells; the interaction acetylates MEF2C leading to increased DNA binding and activation. Interacts with HDAC7 and CARM1. Interacts with HDAC4 and HDAC9; the interaction with HDACs represses transcriptional activity. Interacts with LPIN1. Interacts with MYOCD. Interacts with AKAP13. Interacts with FOXK1; the interaction inhibits MEF2C transactivation activity. Interacts (via N-terminus) with HABP4; this interaction decreases DNA-binding activity of MEF2C in myocardial cells in response to mechanical stress. Interacts with JPH2; interaction specifically takes place with the Junctophilin-2 N-terminal fragment cleavage product of JPH2. Interacts (via MADS box) with SOX18. Interacts with PHF7; the interaction promotes MEF2C binding to its transcription targets. In terms of processing, phosphorylated on Ser-59; which enhances DNA binding activity. Phosphorylated on Ser-396; which is required for Lys-391 sumoylation and inhibits transcriptional activity. Post-translationally, acetylated by p300 on several sites in diffentiating myocytes. Acetylation on Lys-4 increases DNA binding and transactivation. Sumoylated on Lys-391 with SUMO2 but not SUMO1; which represses transcriptional activity. In terms of processing, proteolytically cleaved in cerebellar granule neurons on several sites by caspase 3 and caspase 7 following neurotoxicity. Preferentially cleaves the CDK5-mediated hyperphosphorylated form which leads to neuron apoptosis and transcriptional inactivation. In terms of tissue distribution, expressed in the heart. Expressed in cardiac myocytes (at protein level).

The protein localises to the nucleus. The protein resides in the cytoplasm. Its subcellular location is the sarcoplasm. Its function is as follows. Transcription activator which binds specifically to the MEF2 element present in the regulatory regions of many muscle-specific genes. Controls cardiac morphogenesis and myogenesis, and is also involved in vascular development. Enhances transcriptional activation mediated by SOX18. Plays an essential role in hippocampal-dependent learning and memory by suppressing the number of excitatory synapses and thus regulating basal and evoked synaptic transmission. Crucial for normal neuronal development, distribution, and electrical activity in the neocortex. Necessary for proper development of megakaryocytes and platelets and for bone marrow B-lymphopoiesis. Required for B-cell survival and proliferation in response to BCR stimulation, efficient IgG1 antibody responses to T-cell-dependent antigens and for normal induction of germinal center B-cells. May also be involved in neurogenesis and in the development of cortical architecture. The chain is Myocyte-specific enhancer factor 2C from Rattus norvegicus (Rat).